We begin with the raw amino-acid sequence, 155 residues long: Small ribosomal subunit protein uS7c (155 aa).

Belongs to the universal ribosomal protein uS7 family. In terms of assembly, part of the 30S ribosomal subunit.

Its subcellular location is the plastid. It localises to the chloroplast. Functionally, one of the primary rRNA binding proteins, it binds directly to 16S rRNA where it nucleates assembly of the head domain of the 30S subunit. This chain is Small ribosomal subunit protein uS7c (rps7), found in Spirogyra maxima (Green alga).